The primary structure comprises 108 residues: Tubulin-specific chaperone A (108 aa).

An N-acetylalanine modification is found at A2.

This sequence belongs to the TBCA family. Supercomplex made of cofactors A to E. Cofactors A and D function by capturing and stabilizing tubulin in a quasi-native conformation. Cofactor E binds to the cofactor D-tubulin complex; interaction with cofactor C then causes the release of tubulin polypeptides that are committed to the native state.

It is found in the cytoplasm. It localises to the cytoskeleton. Its function is as follows. Tubulin-folding protein; involved in the early step of the tubulin folding pathway. The polypeptide is Tubulin-specific chaperone A (TBCA) (Oryctolagus cuniculus (Rabbit)).